The chain runs to 508 residues: Probable zinc metalloprotease MCYG_04217 (508 aa).

N-linked (GlcNAc...) asparagine glycosylation occurs at Asn111. Zn(2+)-binding residues include His182, Asp202, and Glu238. An N-linked (GlcNAc...) asparagine glycan is attached at Asn253. Residue Asp265 coordinates Zn(2+). One can recognise a Fibronectin type-III domain in the interval 422–508; the sequence is MPRNVRVDTS…ERGVAVLPFP (87 aa). N-linked (GlcNAc...) asparagine glycosylation is present at Asn435.

The protein belongs to the peptidase M28 family. M28B subfamily. Requires Zn(2+) as cofactor.

The protein resides in the secreted. In Arthroderma otae (strain ATCC MYA-4605 / CBS 113480) (Microsporum canis), this protein is Probable zinc metalloprotease MCYG_04217.